The sequence spans 309 residues: Ferredoxin--NADP reductase (309 aa).

The FAD site is built by aspartate 25, glutamine 33, tyrosine 38, valine 77, phenylalanine 107, aspartate 267, and threonine 307.

It belongs to the ferredoxin--NADP reductase type 2 family. Homodimer. It depends on FAD as a cofactor.

It carries out the reaction 2 reduced [2Fe-2S]-[ferredoxin] + NADP(+) + H(+) = 2 oxidized [2Fe-2S]-[ferredoxin] + NADPH. In Lactobacillus acidophilus (strain ATCC 700396 / NCK56 / N2 / NCFM), this protein is Ferredoxin--NADP reductase.